A 403-amino-acid polypeptide reads, in one-letter code: S-adenosylmethionine synthase (403 aa).

Histidine 17 lines the ATP pocket. A Mg(2+)-binding site is contributed by aspartate 19. Residue glutamate 45 participates in K(+) binding. Glutamate 58 and glutamine 101 together coordinate L-methionine. The flexible loop stretch occupies residues 101-111; that stretch reads QSPDIAMGVDR. ATP-binding positions include 177 to 179, 244 to 245, aspartate 253, 259 to 260, alanine 276, and lysine 280; these read DGK, RF, and RK. An L-methionine-binding site is contributed by aspartate 253. An L-methionine-binding site is contributed by lysine 284.

It belongs to the AdoMet synthase family. As to quaternary structure, homotetramer; dimer of dimers. It depends on Mg(2+) as a cofactor. K(+) serves as cofactor.

The protein resides in the cytoplasm. The catalysed reaction is L-methionine + ATP + H2O = S-adenosyl-L-methionine + phosphate + diphosphate. It participates in amino-acid biosynthesis; S-adenosyl-L-methionine biosynthesis; S-adenosyl-L-methionine from L-methionine: step 1/1. In terms of biological role, catalyzes the formation of S-adenosylmethionine (AdoMet) from methionine and ATP. The overall synthetic reaction is composed of two sequential steps, AdoMet formation and the subsequent tripolyphosphate hydrolysis which occurs prior to release of AdoMet from the enzyme. The polypeptide is S-adenosylmethionine synthase (Geobacillus kaustophilus (strain HTA426)).